The primary structure comprises 170 residues: ATP synthase subunit b (170 aa).

The helical transmembrane segment at 5-25 (YFIPCLLLPTMMLASGGGGET) threads the bilayer.

It belongs to the ATPase B chain family. In terms of assembly, F-type ATPases have 2 components, F(1) - the catalytic core - and F(0) - the membrane proton channel. F(1) has five subunits: alpha(3), beta(3), gamma(1), delta(1), epsilon(1). F(0) has three main subunits: a(1), b(2) and c(10-14). The alpha and beta chains form an alternating ring which encloses part of the gamma chain. F(1) is attached to F(0) by a central stalk formed by the gamma and epsilon chains, while a peripheral stalk is formed by the delta and b chains.

The protein localises to the cell inner membrane. F(1)F(0) ATP synthase produces ATP from ADP in the presence of a proton or sodium gradient. F-type ATPases consist of two structural domains, F(1) containing the extramembraneous catalytic core and F(0) containing the membrane proton channel, linked together by a central stalk and a peripheral stalk. During catalysis, ATP synthesis in the catalytic domain of F(1) is coupled via a rotary mechanism of the central stalk subunits to proton translocation. Functionally, component of the F(0) channel, it forms part of the peripheral stalk, linking F(1) to F(0). The sequence is that of ATP synthase subunit b from Wolinella succinogenes (strain ATCC 29543 / DSM 1740 / CCUG 13145 / JCM 31913 / LMG 7466 / NCTC 11488 / FDC 602W) (Vibrio succinogenes).